Here is a 394-residue protein sequence, read N- to C-terminus: LL-diaminopimelate aminotransferase (394 aa).

Residues Y14 and G41 each coordinate substrate. Pyridoxal 5'-phosphate contacts are provided by residues Y71, 104–105, Y128, N174, Y205, and 233–235; these read AK and SFS. Residues K105, Y128, and N174 each coordinate substrate. N6-(pyridoxal phosphate)lysine is present on K236. Pyridoxal 5'-phosphate is bound by residues R244 and N275. Residues N275 and R369 each coordinate substrate.

It belongs to the class-I pyridoxal-phosphate-dependent aminotransferase family. LL-diaminopimelate aminotransferase subfamily. Homodimer. The cofactor is pyridoxal 5'-phosphate.

It catalyses the reaction (2S,6S)-2,6-diaminopimelate + 2-oxoglutarate = (S)-2,3,4,5-tetrahydrodipicolinate + L-glutamate + H2O + H(+). Its pathway is amino-acid biosynthesis; L-lysine biosynthesis via DAP pathway; LL-2,6-diaminopimelate from (S)-tetrahydrodipicolinate (aminotransferase route): step 1/1. Functionally, involved in the synthesis of meso-diaminopimelate (m-DAP or DL-DAP), required for both lysine and peptidoglycan biosynthesis. Catalyzes the direct conversion of tetrahydrodipicolinate to LL-diaminopimelate. The polypeptide is LL-diaminopimelate aminotransferase (Chlamydia trachomatis serovar L2b (strain UCH-1/proctitis)).